Consider the following 196-residue polypeptide: Probable peptidyl-prolyl cis-trans isomerase (196 aa).

Residues 1–26 (MSFIRSALAAAAFVALSIGAVQTASA) form the signal peptide. Positions 29–194 (PENTVILKLK…KIIKATIEAD (166 aa)) constitute a PPIase cyclophilin-type domain.

This sequence belongs to the cyclophilin-type PPIase family.

Its subcellular location is the periplasm. The enzyme catalyses [protein]-peptidylproline (omega=180) = [protein]-peptidylproline (omega=0). PPIases accelerate the folding of proteins. It catalyzes the cis-trans isomerization of proline imidic peptide bonds in oligopeptides. The chain is Probable peptidyl-prolyl cis-trans isomerase (ppi) from Brucella melitensis biotype 1 (strain ATCC 23456 / CCUG 17765 / NCTC 10094 / 16M).